Reading from the N-terminus, the 482-residue chain is tRNA sulfurtransferase (482 aa).

In terms of domain architecture, THUMP spans 61-165; the sequence is EAIRDALTRI…QDRLLLIKSR (105 aa). Residues 183 to 184, K265, G287, and Q296 each bind ATP; that span reads LI. The cysteines at positions 344 and 456 are disulfide-linked. The region spanning 404 to 482 is the Rhodanese domain; the sequence is FVPTDVLLDI…GFSNVKVYRP (79 aa). Residue C456 is the Cysteine persulfide intermediate of the active site.

The protein belongs to the ThiI family.

It is found in the cytoplasm. It catalyses the reaction [ThiI sulfur-carrier protein]-S-sulfanyl-L-cysteine + a uridine in tRNA + 2 reduced [2Fe-2S]-[ferredoxin] + ATP + H(+) = [ThiI sulfur-carrier protein]-L-cysteine + a 4-thiouridine in tRNA + 2 oxidized [2Fe-2S]-[ferredoxin] + AMP + diphosphate. The enzyme catalyses [ThiS sulfur-carrier protein]-C-terminal Gly-Gly-AMP + S-sulfanyl-L-cysteinyl-[cysteine desulfurase] + AH2 = [ThiS sulfur-carrier protein]-C-terminal-Gly-aminoethanethioate + L-cysteinyl-[cysteine desulfurase] + A + AMP + 2 H(+). It participates in cofactor biosynthesis; thiamine diphosphate biosynthesis. Catalyzes the ATP-dependent transfer of a sulfur to tRNA to produce 4-thiouridine in position 8 of tRNAs, which functions as a near-UV photosensor. Also catalyzes the transfer of sulfur to the sulfur carrier protein ThiS, forming ThiS-thiocarboxylate. This is a step in the synthesis of thiazole, in the thiamine biosynthesis pathway. The sulfur is donated as persulfide by IscS. This is tRNA sulfurtransferase from Pectobacterium atrosepticum (strain SCRI 1043 / ATCC BAA-672) (Erwinia carotovora subsp. atroseptica).